We begin with the raw amino-acid sequence, 403 residues long: L-alanine/L-glutamate racemase (403 aa).

Pyridoxal 5'-phosphate-binding positions include 62–64, 92–93, and 209–211; these read YSN, GL, and AVT. Lys212 is subject to N6-(pyridoxal phosphate)lysine.

Belongs to the trans-sulfuration enzymes family. As to quaternary structure, homotetramer; dimer of active dimers. Requires pyridoxal 5'-phosphate as cofactor.

It carries out the reaction L-alanine = D-alanine. The catalysed reaction is L-glutamate = D-glutamate. It catalyses the reaction L,L-cystathionine + H2O = L-homocysteine + pyruvate + NH4(+). It functions in the pathway cell wall biogenesis; peptidoglycan biosynthesis. In terms of biological role, catalyzes the racemization of L-alanine to D-alanine, and of L-glutamate to D-glutamate. The activity is low, but likely physiological since W.pipientis wMel lacks canonical alr and murI genes, while D-alanine and D-glutamate are essential components of peptidoglycan. Also displays a vestigial cystathionine beta-lyase (CBL) activity, cleaving cystathionine to homocysteine and pyruvate; however, this reaction seems not to be physiologically relevant since the only met gene in the genome of this obligately intracellular parasitic bacterium is metC, demonstrating that it is a methionine auxotroph. The sequence is that of L-alanine/L-glutamate racemase from Wolbachia pipientis wMel.